Reading from the N-terminus, the 529-residue chain is UDP-glucuronosyltransferase 2B33 (529 aa).

The first 24 residues, 1–24, serve as a signal peptide directing secretion; it reads MSVKWTSIILLIQLSFYFSSGSCG. 2 N-linked (GlcNAc...) asparagine glycosylation sites follow: Asn67 and Asn68. The chain crosses the membrane as a helical span at residues 494 to 514; sequence IGFLLACVATVIFIIMKCCLF.

This sequence belongs to the UDP-glycosyltransferase family.

The protein resides in the microsome membrane. The protein localises to the endoplasmic reticulum membrane. It catalyses the reaction glucuronate acceptor + UDP-alpha-D-glucuronate = acceptor beta-D-glucuronoside + UDP + H(+). UDPGTs are of major importance in the conjugation and subsequent elimination of potentially toxic xenobiotics and endogenous compounds. This isozyme has glucuronidating capacity on estriol and does not catalyze the glucuronidation of beta-estradiol. Capable of conjugating 4-hydroxyestrone, androsterone, diclofenac, and hyodeoxycholic acid. This is UDP-glucuronosyltransferase 2B33 (UGT2B33) from Macaca mulatta (Rhesus macaque).